The sequence spans 452 residues: Pup--protein ligase (452 aa).

Residue glutamate 9 participates in Mg(2+) binding. Arginine 53 is a binding site for ATP. Tyrosine 55 serves as a coordination point for Mg(2+). The active-site Proton acceptor is aspartate 57. Glutamate 63 is a binding site for Mg(2+). 2 residues coordinate ATP: threonine 66 and tryptophan 419.

It belongs to the Pup ligase/Pup deamidase family. Pup-conjugating enzyme subfamily.

It carries out the reaction ATP + [prokaryotic ubiquitin-like protein]-L-glutamate + [protein]-L-lysine = ADP + phosphate + N(6)-([prokaryotic ubiquitin-like protein]-gamma-L-glutamyl)-[protein]-L-lysine.. It participates in protein degradation; proteasomal Pup-dependent pathway. It functions in the pathway protein modification; protein pupylation. Catalyzes the covalent attachment of the prokaryotic ubiquitin-like protein modifier Pup to the proteasomal substrate proteins, thereby targeting them for proteasomal degradation. This tagging system is termed pupylation. The ligation reaction involves the side-chain carboxylate of the C-terminal glutamate of Pup and the side-chain amino group of a substrate lysine. This Mycobacterium ulcerans (strain Agy99) protein is Pup--protein ligase.